A 249-amino-acid chain; its full sequence is uncharacterized protein (249 aa).

The stretch at 30–65 forms a coiled coil; it reads KVDKLKKLEIKKLEDQKKLKEQEEKHRLTLIRLANA. A disordered region spans residues 66–97; the sequence is PPQTNSINNNNNNNNNIKTNRPPLIYGEDKDK.

This is an uncharacterized protein from Dictyostelium discoideum (Social amoeba).